The chain runs to 428 residues: Glutamate-1-semialdehyde 2,1-aminomutase (428 aa).

Position 267 is an N6-(pyridoxal phosphate)lysine (K267).

It belongs to the class-III pyridoxal-phosphate-dependent aminotransferase family. HemL subfamily. Homodimer. It depends on pyridoxal 5'-phosphate as a cofactor.

It is found in the cytoplasm. The enzyme catalyses (S)-4-amino-5-oxopentanoate = 5-aminolevulinate. It participates in porphyrin-containing compound metabolism; protoporphyrin-IX biosynthesis; 5-aminolevulinate from L-glutamyl-tRNA(Glu): step 2/2. It functions in the pathway porphyrin-containing compound metabolism; chlorophyll biosynthesis. This Prochlorococcus marinus (strain MIT 9303) protein is Glutamate-1-semialdehyde 2,1-aminomutase.